The following is a 187-amino-acid chain: UPF0215 protein PAE0952 (187 aa).

This sequence belongs to the UPF0215 family.

The protein is UPF0215 protein PAE0952 of Pyrobaculum aerophilum (strain ATCC 51768 / DSM 7523 / JCM 9630 / CIP 104966 / NBRC 100827 / IM2).